We begin with the raw amino-acid sequence, 347 residues long: MKPWAAFHLIFLVASSLEGEVSNYGTRGAQDTEPTCRTEHQCTRDKIILQSQPGIPGIPGVPGINGSEGLKGDPGPQGLPGETGFDGIPGVAGPKGDKGDQGDKGDKGDKGDKGDACILDDCPPTDVEVRNCQDLLEHGEILNGWYTIYPTKENPMVVFCDMETDGGGWLVFQRRQDGSVDFYLDWESYKKGFGKQESEFWLGNDKIHLLTSSGTQQLRIDLEDFEGSRTFAKYSSFSIGDENEKYRLIVGSYLDGSMNDSFRIHNGHSFSTKDRDNDTNKGNCAMMYKGAWWYFHCHHANLNGLYYKGKHANYADGINWRSGKGYYYSYKYADMKIRPQQSETTVS.

Residues 1–19 form the signal peptide; that stretch reads MKPWAAFHLIFLVASSLEG. The disordered stretch occupies residues 49-115; that stretch reads LQSQPGIPGI…DKGDKGDKGD (67 aa). The Collagen-like domain occupies 57-114; it reads GIPGVPGINGSEGLKGDPGPQGLPGETGFDGIPGVAGPKGDKGDQGDKGDKGDKGDKG. Residues 95–115 show a composition bias toward basic and acidic residues; sequence KGDKGDQGDKGDKGDKGDKGD. Positions 121-341 constitute a Fibrinogen C-terminal domain; it reads DCPPTDVEVR…YADMKIRPQQ (221 aa). Disulfide bonds link cysteine 132–cysteine 160 and cysteine 284–cysteine 297.

The protein belongs to the ficolin lectin family. Veficolin subfamily. Post-translationally, hydroxylated, possibly at Pro-74 and Pro-94. As to expression, expressed by the venom duct.

The protein resides in the secreted. Functionally, initiates complement activation and/or interferes in platelet aggregation and/or blood coagulation. This Cerberus rynchops (Dog-faced water snake) protein is Ryncolin-2.